The sequence spans 125 residues: Ribosome-binding factor A (125 aa).

This sequence belongs to the RbfA family. As to quaternary structure, monomer. Binds 30S ribosomal subunits, but not 50S ribosomal subunits or 70S ribosomes.

Its subcellular location is the cytoplasm. One of several proteins that assist in the late maturation steps of the functional core of the 30S ribosomal subunit. Associates with free 30S ribosomal subunits (but not with 30S subunits that are part of 70S ribosomes or polysomes). Required for efficient processing of 16S rRNA. May interact with the 5'-terminal helix region of 16S rRNA. The protein is Ribosome-binding factor A of Carboxydothermus hydrogenoformans (strain ATCC BAA-161 / DSM 6008 / Z-2901).